A 252-amino-acid polypeptide reads, in one-letter code: Aquaporin TIP4-4 (252 aa).

2 consecutive transmembrane segments (helical) span residues 20 to 40 (AVLA…GSAM) and 53 to 73 (VVGL…MVSA). The NPA 1 signature appears at 83–85 (NPA). Transmembrane regions (helical) follow at residues 105-125 (VAAQ…LAVA), 143-163 (GVLM…ATVV), and 168-188 (AVGG…VLAG). An NPA 2 motif is present at residues 197–199 (NPA). A helical membrane pass occupies residues 216–236 (VYWVGPLIGGPLAGLVYDGLF).

The protein belongs to the MIP/aquaporin (TC 1.A.8) family. TIP (TC 1.A.8.10) subfamily.

The protein resides in the vacuole membrane. Aquaporins facilitate the transport of water and small neutral solutes across cell membranes. The chain is Aquaporin TIP4-4 (TIP4-4) from Zea mays (Maize).